A 168-amino-acid polypeptide reads, in one-letter code: NADH-quinone oxidoreductase subunit B (168 aa).

Positions 49, 50, 114, and 144 each coordinate [4Fe-4S] cluster.

Belongs to the complex I 20 kDa subunit family. As to quaternary structure, NDH-1 is composed of 14 different subunits. Subunits NuoB, C, D, E, F, and G constitute the peripheral sector of the complex. Requires [4Fe-4S] cluster as cofactor.

The protein localises to the cell membrane. It catalyses the reaction a quinone + NADH + 5 H(+)(in) = a quinol + NAD(+) + 4 H(+)(out). Its function is as follows. NDH-1 shuttles electrons from NADH, via FMN and iron-sulfur (Fe-S) centers, to quinones in the respiratory chain. Couples the redox reaction to proton translocation (for every two electrons transferred, four hydrogen ions are translocated across the cytoplasmic membrane), and thus conserves the redox energy in a proton gradient. The protein is NADH-quinone oxidoreductase subunit B of Wolbachia pipientis wMel.